We begin with the raw amino-acid sequence, 352 residues long: Glycerol-3-phosphate dehydrogenase [NAD(P)+] (352 aa).

NADPH contacts are provided by tryptophan 11, arginine 37, and lysine 112. Positions 112, 153, and 155 each coordinate sn-glycerol 3-phosphate. Position 157 (alanine 157) interacts with NADPH. 5 residues coordinate sn-glycerol 3-phosphate: lysine 208, aspartate 261, serine 271, arginine 272, and asparagine 273. The active-site Proton acceptor is the lysine 208. An NADPH-binding site is contributed by arginine 272. NADPH-binding residues include valine 296 and glutamate 298.

Belongs to the NAD-dependent glycerol-3-phosphate dehydrogenase family.

The protein localises to the cytoplasm. It carries out the reaction sn-glycerol 3-phosphate + NAD(+) = dihydroxyacetone phosphate + NADH + H(+). The catalysed reaction is sn-glycerol 3-phosphate + NADP(+) = dihydroxyacetone phosphate + NADPH + H(+). It participates in membrane lipid metabolism; glycerophospholipid metabolism. Catalyzes the reduction of the glycolytic intermediate dihydroxyacetone phosphate (DHAP) to sn-glycerol 3-phosphate (G3P), the key precursor for phospholipid synthesis. This chain is Glycerol-3-phosphate dehydrogenase [NAD(P)+], found in Polaromonas naphthalenivorans (strain CJ2).